Consider the following 210-residue polypeptide: MEIPVYNASGEIVKNINISEDVFGVPFNEALVHQAFVAQQANARQGTQSTKTRGEVQGSSRKIYRQKGTGNARMGTNRSPVRRHGGVAFGPRPRDFSKDLPKKMRRQAIRCVLSFKLESGELKVIDQLSFDEPKTRDMAKILTALQVISPTLIAVDNPDTNFIKSARNIPAVKTTPANLLNISDMLKNKQLVMTEEAVRQVEELWGQRSG.

A compositionally biased stretch (polar residues) spans Ala41–Lys51. Disordered regions lie at residues Ala41–Ser60 and Lys67–Lys98.

Belongs to the universal ribosomal protein uL4 family. As to quaternary structure, part of the 50S ribosomal subunit.

Its function is as follows. One of the primary rRNA binding proteins, this protein initially binds near the 5'-end of the 23S rRNA. It is important during the early stages of 50S assembly. It makes multiple contacts with different domains of the 23S rRNA in the assembled 50S subunit and ribosome. Forms part of the polypeptide exit tunnel. In Dehalococcoides mccartyi (strain ATCC BAA-2100 / JCM 16839 / KCTC 5957 / BAV1), this protein is Large ribosomal subunit protein uL4.